A 2051-amino-acid chain; its full sequence is MDAYSTRPLTLSHGSLEHVLLVPTASFFIASQLQEQFNKILPEPTEGFAADDEPTTPAELVGKFLGYVSSLVEPSKVGQFDQVLNLCLTEFENCYLEGNDIHALAAKLLQENDTTLVKTKELIKNYITARIMAKRPFDKKSNSALFRAVGEGNAQLVAIFGGQGNTDDYFEELRDLYQTYHVLVGDLIKFSAETLSELIRTTLDAEKVFTQGLNILEWLENPSNTPDKDYLLSIPISCPLIGVIQLAHYVVTAKLLGFTPGELRSYLKGATGHSQGLVTAVAIAETDSWESFFVSVRKAITVLFFIGVRCYEAYPNTSLPPSILEDSLENNEGVPSPMLSISNLTQEQVQDYVNKTNSHLPAGKQVEISLVNGAKNLVVSGPPQSLYGLNLTLRKAKAPSGLDQSRIPFSERKLKFSNRFLPVASPFHSHLLVPASDLINKDLVKNNVSFNAKDIQIPVYDTFDGSDLRVLSGSISERIVDCIIRLPVKWETTTQFKATHILDFGPGGASGLGVLTHRNKDGTGVRVIVAGTLDINPDDDYGFKQEIFDVTSNGLKKNPNWLEEYHPKLIKNKSGKIFVETKFSKLIGRPPLLVPGMTPCTVSPDFVAATTNAGYTIELAGGGYFSAAGMTAAIDSVVSQIEKGSTFGINLIYVNPFMLQWGIPLIKELRSKGYPIQFLTIGAGVPSLEVASEYIETLGLKYLGLKPGSIDAISQVINIAKAHPNFPIALQWTGGRGGGHHSFEDAHTPMLQMYSKIRRHPNIMLIFGSGFGSADDTYPYLTGEWSTKFDYPPMPFDGFLFGSRVMIAKEVKTSPDAKKCIAACTGVPDDKWEQTYKKPTGGIVTVRSEMGEPIHKIATRGVMLWKEFDETIFNLPKNKLVPTLEAKRDYIISRLNADFQKPWFATVNGQARDLATMTYEEVAKRLVELMFIRSTNSWFDVTWRTFTGDFLRRVEERFTKSKTLSLIQSYSLLDKPDEAIEKVFNAYPAAREQFLNAQDIDHFLSMCQNPMQKPVPFVPVLDRRFEIFFKKDSLWQSEHLEAVVDQDVQRTCILHGPVAAQFTKVIDEPIKSIMDGIHDGHIKKLLHQYYGDDESKIPAVEYFGGESPVDVQSQVDSSSVSEDSAVFKATSSTDEESWFKALAGSEINWRHASFLCSFITQDKMFVSNPIRKVFKPSQGMVVEISNGNTSSKTVVTLSEPVQGELKPTVILKLLKENIIQMEMIENRTMDGKPVSLPLLYNFNPDNGFAPISEVMEDRNQRIKEMYWKLWIDEPFNLDFDPRDVIKGKDFEITAKEVYDFTHAVGNNCEDFVSRPDRTMLAPMDFAIVVGWRAIIKAIFPNTVDGDLLKLVHLSNGYKMIPGAKPLQVGDVVSTTAVIESVVNQPTGKIVDVVGTLSRNGKPVMEVTSSFFYRGNYTDFENTFQKTVEPVYQMHIKTSKDIAVLRSKEWFQLDDEDFDLLNKTLTFETETEVTFKNANIFSSVKCFGPIKVELPTKETVEIGIVDYEAGASHGNPVVDFLKRNGSTLEQKVNLENPIPIAVLDSYTPSTNEPYARVSGDLNPIHVSRHFASYANLPGTITHGMFSSASVRALIENWAADSVSSRVRGYTCQFVDMVLPNTALKTSIQHVGMINGRKLIKFETRNEDDVVVLTGEAEIEQPVTTFVFTGQGSQEQGMGMDLYKTSKAAQDVWNRADNHFKDTYGFSILDIVINNPVNLTIHFGGEKGKRIRENYSAMIFETIVDGKLKTEKIFKEINEHSTSYTFRSEKGLLSATQFTQPALTLMEKAAFEDLKSKGLIPADATFAGHSLGEYAALASLADVMSIESLVEVVFYRGMTMQVAVPRDELGRSNYGMIAINPGRVAASFSQEALQYVVERVGKRTGWLVEIVNYNVENQQYVAAGDLRALDTVTNVLNFIKLQKIDIIELQKSLSLEEVEGHLFEIIDEASKKSAVKPRPLKLERGFACIPLVGISVPFHSTYLMNGVKPFKSFLKKNIIKENVKVARLAGKYIPNLTAKPFQVTKEYFQDVYDLTGSEPIKEIIDNWEKYEQS.

Methionine 1 is subject to N-acetylmethionine. The segment at 1–468 is acetyltransferase; the sequence is MDAYSTRPLT…VYDTFDGSDL (468 aa). The active-site For acetyltransferase activity is the serine 274. The interval 480–868 is enoyl reductase; it reads VDCIIRLPVK…TRGVMLWKEF (389 aa). Threonine 733 bears the Phosphothreonine mark. Serine 1121 carries the post-translational modification Phosphoserine. Positions 1144–1626 are dehydratase; it reads GSEINWRHAS…LPNTALKTSI (483 aa). A Glycyl lysine isopeptide (Lys-Gly) (interchain with G-Cter in ubiquitin) cross-link involves residue lysine 1364. A MaoC-like domain is found at 1523 to 1648; the sequence is NGSTLEQKVN…KFETRNEDDV (126 aa). Residues 1627–1845 form a malonyl/palmitoyl transferase region; it reads QHVGMINGRK…MTMQVAVPRD (219 aa). Catalysis depends on serine 1808, which acts as the For malonyltransferase activity.

This sequence belongs to the fungal fatty acid synthetase subunit beta family. As to quaternary structure, [Alpha(6)beta(6)] hexamers of two multifunctional subunits (alpha and beta).

The enzyme catalyses acetyl-CoA + n malonyl-CoA + 2n NADPH + 4n H(+) = a long-chain-acyl-CoA + n CoA + n CO2 + 2n NADP(+).. It catalyses the reaction holo-[ACP] + acetyl-CoA = acetyl-[ACP] + CoA. It carries out the reaction holo-[ACP] + malonyl-CoA = malonyl-[ACP] + CoA. The catalysed reaction is a (3R)-hydroxyacyl-[ACP] = a (2E)-enoyl-[ACP] + H2O. The enzyme catalyses a 2,3-saturated acyl-[ACP] + NAD(+) = a (2E)-enoyl-[ACP] + NADH + H(+). It catalyses the reaction (9Z)-octadecenoyl-[ACP] + H2O = (9Z)-octadecenoate + holo-[ACP] + H(+). Its function is as follows. Fatty acid synthetase catalyzes the formation of long-chain fatty acids from acetyl-CoA, malonyl-CoA and NADPH. The beta subunit contains domains for: [acyl-carrier-protein] acetyltransferase and malonyltransferase, S-acyl fatty acid synthase thioesterase, enoyl-[acyl-carrier-protein] reductase, and 3-hydroxypalmitoyl-[acyl-carrier-protein] dehydratase. The protein is Fatty acid synthase subunit beta (FAS1) of Saccharomyces cerevisiae (strain ATCC 204508 / S288c) (Baker's yeast).